The primary structure comprises 645 residues: Aminopeptidase P1 (645 aa).

N-acetylserine is present on Ser2. Positions 69 and 420 each coordinate a peptide. Mn(2+) is bound by residues Asp440, Asp451, and His514. A peptide is bound by residues His514, His523, and Glu549. Mn(2+)-binding residues include Glu549 and Glu563.

Belongs to the peptidase M24B family. Homodimer. Interacts with N-1-naphthylphthalamic acid (NPA). The cofactor is Mn(2+). Requires Zn(2+) as cofactor. In terms of processing, glycosylated. Also present in a non-glycosylated form. Ubiquitous with preferential expression in 5 days-old seedlings, roots, flowers, inflorescences and rosette leaves (at protein levels).

Its subcellular location is the cytoplasm. It is found in the cell membrane. The protein localises to the microsome membrane. The catalysed reaction is Release of any N-terminal amino acid, including proline, that is linked to proline, even from a dipeptide or tripeptide.. Its activity is regulated as follows. Inhibited by EGTA and apstatin, and, to some extent, by the flavonoid kaempferol. Functionally, catalyzes the removal of a penultimate prolyl residue from the N-termini of peptides, such as Arg-Pro-Pro. Aminopeptidase that binds to the auxin transport inhibitor N-1-naphthylphthalamic acid (NPA). May play a negative role in the regulation of PIN auxin transport proteins. This chain is Aminopeptidase P1, found in Arabidopsis thaliana (Mouse-ear cress).